A 144-amino-acid chain; its full sequence is PE family protein PE9 (144 aa).

The PE domain occupies 1–87 (MSYMIATPAA…RTLTGGCGVF (87 aa)). The segment at 98–124 (AAEHRAAGAGRRQRRRRSGDGQWRLRQ) is disordered.

The protein belongs to the mycobacterial PE family. Forms a complex with PE10. The complex interacts with human TLR4.

The protein localises to the secreted. It is found in the cell wall. It localises to the cell surface. In terms of biological role, together with PE10, induces macrophage apoptosis through human Toll-like receptor 4 (TLR4) signaling pathway. Interaction with TLR4 leads to increased levels of phospho-IRF-3, increase in the transcript levels of IFN-beta and pro-apoptotic genes, up-regulation of IL-10, down-regulation of IL-1b and enhanced levels of macrophage apoptosis. This is PE family protein PE9 from Mycobacterium tuberculosis (strain ATCC 25618 / H37Rv).